Consider the following 202-residue polypeptide: GTP cyclohydrolase-2 (202 aa).

48–52 provides a ligand contact to GTP; sequence RLHSE. Residues Cys-53, Cys-64, and Cys-66 each coordinate Zn(2+). GTP contacts are provided by residues Gln-69, 91 to 93, and Thr-113; that span reads EGR. Asp-125 (proton acceptor) is an active-site residue. Arg-127 acts as the Nucleophile in catalysis. Positions 148 and 153 each coordinate GTP.

It belongs to the GTP cyclohydrolase II family. Zn(2+) is required as a cofactor.

It catalyses the reaction GTP + 4 H2O = 2,5-diamino-6-hydroxy-4-(5-phosphoribosylamino)-pyrimidine + formate + 2 phosphate + 3 H(+). The protein operates within cofactor biosynthesis; riboflavin biosynthesis; 5-amino-6-(D-ribitylamino)uracil from GTP: step 1/4. Catalyzes the conversion of GTP to 2,5-diamino-6-ribosylamino-4(3H)-pyrimidinone 5'-phosphate (DARP), formate and pyrophosphate. The polypeptide is GTP cyclohydrolase-2 (Colwellia psychrerythraea (strain 34H / ATCC BAA-681) (Vibrio psychroerythus)).